A 128-amino-acid polypeptide reads, in one-letter code: Mediator of RNA polymerase II transcription subunit 31-A (128 aa).

It belongs to the Mediator complex subunit 31 family. Component of the Mediator complex.

It localises to the nucleus. Functionally, component of the Mediator complex, a coactivator involved in the regulated transcription of nearly all RNA polymerase II-dependent genes. Mediator functions as a bridge to convey information from gene-specific regulatory proteins to the basal RNA polymerase II transcription machinery. Mediator is recruited to promoters by direct interactions with regulatory proteins and serves as a scaffold for the assembly of a functional preinitiation complex with RNA polymerase II and the general transcription factors. This is Mediator of RNA polymerase II transcription subunit 31-A (med31-a) from Xenopus laevis (African clawed frog).